Reading from the N-terminus, the 521-residue chain is Cytochrome P450 1A1 (521 aa).

Residue F229 coordinates substrate. C463 is a binding site for heme.

The protein belongs to the cytochrome P450 family. Heme is required as a cofactor.

Its subcellular location is the endoplasmic reticulum membrane. The protein resides in the microsome membrane. The enzyme catalyses an organic molecule + reduced [NADPH--hemoprotein reductase] + O2 = an alcohol + oxidized [NADPH--hemoprotein reductase] + H2O + H(+). Cytochromes P450 are a group of heme-thiolate monooxygenases. They oxidize a variety of structurally unrelated compounds, including steroids, fatty acids, and xenobiotics. The protein is Cytochrome P450 1A1 (cyp1a1) of Chelon auratus (Golden grey mullet).